Consider the following 596-residue polypeptide: RNA-binding protein involved in heterochromatin assembly dri1 (596 aa).

Ser176 bears the Phosphoserine mark. In terms of domain architecture, RRM spans 236 to 314; the sequence is KIVHVAGLTN…RMLEIIPSST (79 aa). The RanBP2-type 1 zinc-finger motif lies at 335–364; sequence RPGDWNCPMCGFSNFQRRTSCFRCSFPGPT. Ser429 is modified (phosphoserine). 2 RanBP2-type zinc fingers span residues 437–468 and 552–580; these read RAGD…SRAT and DQGD…PHYS.

Interacts with dpb4. Interacts with chp1.

Its subcellular location is the chromosome. It localises to the nucleus. The protein resides in the cytoplasm. The protein localises to the cytoplasmic granule. Mediates heterochromatin assembly by promoting RNAi-mediated heterochromatin silencing and histone deacetylation. Binds pericetromeric transcripts and recruits the RNA-induced transcriptional silencing (RITS) complex to heterochromatin. Recruits sir2 to chromatin to promote deacetylation of 'Lys-9' of histone H3. Involved in bipolar spindle assembly during mitosis. Required for proper localization of kinesin-14/Klp2 on the spindle microtubules. This chain is RNA-binding protein involved in heterochromatin assembly dri1, found in Schizosaccharomyces pombe (strain 972 / ATCC 24843) (Fission yeast).